The chain runs to 210 residues: Translation initiation factor IF-3 (210 aa).

The interval 169–210 (APKQAPAPKKERTEESAEKAGSAGETEPVPAASAAAEAPANV) is disordered. Residues 176 to 186 (PKKERTEESAE) show a composition bias toward basic and acidic residues. The span at 187 to 210 (KAGSAGETEPVPAASAAAEAPANV) shows a compositional bias: low complexity.

This sequence belongs to the IF-3 family. Monomer.

The protein resides in the cytoplasm. Its function is as follows. IF-3 binds to the 30S ribosomal subunit and shifts the equilibrium between 70S ribosomes and their 50S and 30S subunits in favor of the free subunits, thus enhancing the availability of 30S subunits on which protein synthesis initiation begins. This is Translation initiation factor IF-3 from Deinococcus deserti (strain DSM 17065 / CIP 109153 / LMG 22923 / VCD115).